A 222-amino-acid polypeptide reads, in one-letter code: MKNNSQLLMPREKMLKFGISALTDVELLALFLRTGTRGKDVLTLAKEMLENFGSLYGLLTSEYEQFSGVHGIGVAKFAQLKGIAELARRYYNVRMREESPLLSPEMTREFLQSQLTGEEREIFMVIFLDSQHRVITHRRLFSGTLNHVEVHPREIIREAIKINASALILAHNHPSGCAEPSKADKLITERIIKSCQFMDLRVLDHIVIGRGEYVSFAERGWI.

The MPN domain occupies 100–222; the sequence is PLLSPEMTRE…YVSFAERGWI (123 aa). 3 residues coordinate Zn(2+): histidine 171, histidine 173, and aspartate 184. A JAMM motif motif is present at residues 171–184; the sequence is HNHPSGCAEPSKAD.

Belongs to the UPF0758 family. YicR subfamily.

In Escherichia coli (strain K12 / MC4100 / BW2952), this protein is UPF0758 protein YicR.